The following is a 598-amino-acid chain: Arylsulfate sulfotransferase AssT (598 aa).

The N-terminal stretch at 1-27 (MFDKYRKTLVAGTVAITLGLSASGVMA) is a signal peptide. 4-methylumbelliferone-binding residues include H279 and H383. C445 and C451 are oxidised to a cystine. H463 lines the 4-methylumbelliferone pocket. Residue H463 is the Nucleophile; sulfurylated histidine covalent intermediate of the active site.

The protein belongs to the aryl sulfotransferase family. As to quaternary structure, homodimer. Post-translationally, the disulfide bond is crucial for enzyme activity.

It localises to the periplasm. It catalyses the reaction an aryl sulfate + a phenol = an aryl sulfate + a phenol. It carries out the reaction 4-methylumbelliferone sulfate + phenol = phenyl sulfate + 4-methylumbelliferone. Its function is as follows. Catalyzes the transfer of a sulfate group from a phenyl sulfate ester to other phenolic compounds. In vitro, is able to use 4-methylumbelliferyl sulfate and p-nitrophenyl sulfate (PNS) as donor substrates with phenol as the acceptor substrate. Cannot use 3'-phosphoadenosine-5'-phophosulfate (PAPS), the donor substrate of mammalian sulfotransferase. The polypeptide is Arylsulfate sulfotransferase AssT (Escherichia coli O6:H1 (strain CFT073 / ATCC 700928 / UPEC)).